The primary structure comprises 312 residues: Olfactory receptor 2J2 (312 aa).

At methionine 1–valine 26 the chain is on the extracellular side. Asparagine 6 carries N-linked (GlcNAc...) asparagine glycosylation. The helical transmembrane segment at valine 27–serine 50 threads the bilayer. The Cytoplasmic portion of the chain corresponds to tyrosine 51 to threonine 58. A helical transmembrane segment spans residues proline 59–proline 80. The Extracellular portion of the chain corresponds to glutamine 81–glutamine 101. Cysteine 98 and cysteine 190 form a disulfide bridge. A helical membrane pass occupies residues leucine 102 to tyrosine 121. The Cytoplasmic portion of the chain corresponds to aspartate 122–arginine 140. The helical transmembrane segment at phenylalanine 141–leucine 159 threads the bilayer. At histidine 160–asparagine 196 the chain is on the extracellular side. Residues glutamate 197–glycine 220 traverse the membrane as a helical segment. Over alanine 221–lysine 237 the chain is Cytoplasmic. The chain crosses the membrane as a helical span at residues valine 238 to tyrosine 260. Over leucine 261–lysine 273 the chain is Extracellular. Residues phenylalanine 274–leucine 293 form a helical membrane-spanning segment. The Cytoplasmic portion of the chain corresponds to arginine 294 to lysine 312.

Belongs to the G-protein coupled receptor 1 family.

It is found in the cell membrane. Odorant receptor. This Homo sapiens (Human) protein is Olfactory receptor 2J2 (OR2J2).